Reading from the N-terminus, the 598-residue chain is MGDYKSAKEAFVSDNPGASIWSINAVSLVALATYALWIALSPYIRHGLLNNYLICVLPLLFGVTIFSTSPLVFTSFLSIISLAFITKSQKCFKSVSSPEKPKGQWLDESDSDEEPAEPASAAGSAAVSPVKLLPSQVAFASGSLLSPDPTTSPMSPSSSSASGHEDPLGIMGVNRRRSLLEGVSLDVPSHIDSKVRISPVPYLRLKKSRATKAQWVKEKGRLPFLTVYRAHMMLMTVICILAVDFEVFPRWQGKCEDFGTSLMDVGVGSFVFSLGLVSTKSLSPPPPTPTPSSPALNSHIIPLTPSPFTSILISLRKSIPILVLGFIRLIMVKGSDYPEHVTEYGVHWNFFFTLALVPVLAVGIRPLTQWLRWSVLGVIISLLHQLWLTYYLQSIVFSFGRSGIFLANKEGFSSLPGYLSIFLIGLSIGDHVLRLSLPPRRERVVSETNEEHEQSHFERKKLDLIMELIGYSLGWWALLGGWIWAGGEVSRRLANAPYVFWVAAYNTTFLLGYLLLTHIIPSPTSSQTSPSILVPPLLDAMNKNGLAIFLAANLLTGLVNVSMKTMYAPAWLSMGVLMLYTLTISCVGWILKGRRIKI.

2 helical membrane passes run 20-40 and 53-73; these read IWSI…WIAL and LICV…PLVF. Disordered regions lie at residues 94–127 and 144–167; these read SVSS…SAAV and LLSP…HEDP. A compositionally biased stretch (acidic residues) spans 107 to 116; sequence DESDSDEEPA. Low complexity-rich tracts occupy residues 117 to 127 and 144 to 162; these read EPASAAGSAAV and LLSP…SSAS. 8 helical membrane-spanning segments follow: residues 223–243, 258–278, 307–327, 344–364, 377–397, 412–432, 464–484, and 500–520; these read PFLT…ILAV, FGTS…GLVS, PFTS…LGFI, YGVH…AVGI, GVII…SIVF, FSSL…GDHV, LIME…GWIW, and FWVA…THII. Asparagine 560 carries N-linked (GlcNAc...) asparagine glycosylation. The chain crosses the membrane as a helical span at residues 571–591; the sequence is WLSMGVLMLYTLTISCVGWIL.

It belongs to the PIGW family.

It localises to the endoplasmic reticulum membrane. It participates in glycolipid biosynthesis; glycosylphosphatidylinositol-anchor biosynthesis. In terms of biological role, probable acetyltransferase, which acetylates the inositol ring of phosphatidylinositol during biosynthesis of GPI-anchor. The polypeptide is GPI-anchored wall transfer protein 1 (GWT1) (Cryptococcus neoformans var. grubii serotype A (strain H99 / ATCC 208821 / CBS 10515 / FGSC 9487) (Filobasidiella neoformans var. grubii)).